A 331-amino-acid polypeptide reads, in one-letter code: Phosphate acyltransferase (331 aa).

This sequence belongs to the PlsX family. In terms of assembly, homodimer. Probably interacts with PlsY.

It localises to the cytoplasm. It carries out the reaction a fatty acyl-[ACP] + phosphate = an acyl phosphate + holo-[ACP]. Its pathway is lipid metabolism; phospholipid metabolism. Its function is as follows. Catalyzes the reversible formation of acyl-phosphate (acyl-PO(4)) from acyl-[acyl-carrier-protein] (acyl-ACP). This enzyme utilizes acyl-ACP as fatty acyl donor, but not acyl-CoA. The protein is Phosphate acyltransferase of Wolinella succinogenes (strain ATCC 29543 / DSM 1740 / CCUG 13145 / JCM 31913 / LMG 7466 / NCTC 11488 / FDC 602W) (Vibrio succinogenes).